A 447-amino-acid polypeptide reads, in one-letter code: tRNA (guanine(37)-N(1))-methyltransferase (447 aa).

S-adenosyl-L-methionine is bound by residues histidine 241, 285 to 286 (DL), and 313 to 314 (DV).

It belongs to the class I-like SAM-binding methyltransferase superfamily. TRM5/TYW2 family. In terms of assembly, monomer.

Its subcellular location is the mitochondrion matrix. It localises to the nucleus. The protein resides in the cytoplasm. It catalyses the reaction guanosine(37) in tRNA + S-adenosyl-L-methionine = N(1)-methylguanosine(37) in tRNA + S-adenosyl-L-homocysteine + H(+). In terms of biological role, specifically methylates the N1 position of guanosine-37 in various cytoplasmic and mitochondrial tRNAs. Methylation is not dependent on the nature of the nucleoside 5' of the target nucleoside. This is the first step in the biosynthesis of wybutosine (yW), a modified base adjacent to the anticodon of tRNAs and required for accurate decoding. The polypeptide is tRNA (guanine(37)-N(1))-methyltransferase (Giardia intestinalis (strain ATCC 50803 / WB clone C6) (Giardia lamblia)).